Reading from the N-terminus, the 506-residue chain is 2,3-bisphosphoglycerate-independent phosphoglycerate mutase (506 aa).

2 residues coordinate Mn(2+): aspartate 13 and serine 63. The active-site Phosphoserine intermediate is the serine 63. Residues histidine 124, 153–154 (RD), arginine 183, arginine 189, 254–257 (RADR), and lysine 330 contribute to the substrate site. The Mn(2+) site is built by aspartate 396, histidine 400, aspartate 437, histidine 438, and histidine 456.

It belongs to the BPG-independent phosphoglycerate mutase family. As to quaternary structure, monomer. Mn(2+) is required as a cofactor.

The enzyme catalyses (2R)-2-phosphoglycerate = (2R)-3-phosphoglycerate. It participates in carbohydrate degradation; glycolysis; pyruvate from D-glyceraldehyde 3-phosphate: step 3/5. In terms of biological role, catalyzes the interconversion of 2-phosphoglycerate and 3-phosphoglycerate. This Cereibacter sphaeroides (strain KD131 / KCTC 12085) (Rhodobacter sphaeroides) protein is 2,3-bisphosphoglycerate-independent phosphoglycerate mutase.